A 504-amino-acid chain; its full sequence is Maturase K (504 aa).

This sequence belongs to the intron maturase 2 family. MatK subfamily.

The protein resides in the plastid. Its subcellular location is the chloroplast. Usually encoded in the trnK tRNA gene intron. Probably assists in splicing its own and other chloroplast group II introns. The chain is Maturase K from Quercus gemelliflora (Pasang hiris).